The primary structure comprises 753 residues: Serine/threonine-protein phosphatase with EF-hands 2 (753 aa).

The region spanning 21–46 is the IQ domain; it reads KAAALIQRWYRRYVARLEMRRRCTWS. A catalytic region spans residues 128–540; the sequence is ATALVEAFRL…PHIVQYQANK (413 aa). Mn(2+) contacts are provided by Asp179, His181, Asp208, and Asn240. Residue His241 is the Proton donor of the active site. Mn(2+) is bound at residue His292. 2 disordered regions span residues 318–382 and 409–435; these read CKTR…GSLD and VTGE…KPTQ. A compositionally biased stretch (basic and acidic residues) spans 322-333; it reads QKSEKQMEEKRR. Residues 348 to 361 are compositionally biased toward low complexity; that stretch reads LPESRSLPSSPLRL. Residues 366–377 are compositionally biased toward polar residues; the sequence is AQKTSRSSSIPC. His488 is a Mn(2+) binding site. 3 consecutive EF-hand domains span residues 568–603, 652–687, and 692–727; these read AHSS…VLHL, RNRS…FSSH, and ITDD…VEKS. 9 residues coordinate Ca(2+): Asp665, Asp667, Ser669, Glu676, Asp705, Asn707, Asp709, His711, and Glu716. Positions 732-753 are disordered; it reads DASECPQATNAKDSGCSSPGAH. Over residues 737–753 the composition is skewed to polar residues; the sequence is PQATNAKDSGCSSPGAH.

This sequence belongs to the PPP phosphatase family. Mn(2+) is required as a cofactor. In terms of tissue distribution, retinal specific.

It is found in the cytoplasm. It localises to the cell projection. The protein resides in the cilium. The protein localises to the photoreceptor outer segment. Its subcellular location is the photoreceptor inner segment. It catalyses the reaction O-phospho-L-seryl-[protein] + H2O = L-seryl-[protein] + phosphate. The catalysed reaction is O-phospho-L-threonyl-[protein] + H2O = L-threonyl-[protein] + phosphate. With respect to regulation, activated by calcium. Functionally, may play a role in phototransduction. May dephosphorylate photoactivated rhodopsin. May function as a calcium sensing regulator of ionic currents, energy production or synaptic transmission. The protein is Serine/threonine-protein phosphatase with EF-hands 2 (PPEF2) of Homo sapiens (Human).